Reading from the N-terminus, the 330-residue chain is Protein rlx (330 aa).

A disordered region spans residues Leu-220–Leu-330. Composition is skewed to basic and acidic residues over residues Asn-237–Arg-269 and Gln-279–Leu-330.

This protein is probably required for relaxation complex formation and plasmid mobilization by conjugative plasmids. This is Protein rlx (rlx) from Staphylococcus aureus.